The primary structure comprises 258 residues: Isoprenyl transferase 2 (258 aa).

Aspartate 39 is an active-site residue. Aspartate 39 is a Mg(2+) binding site. Substrate is bound by residues 40–43 (GNRR), tryptophan 44, arginine 52, histidine 57, and 85–87 (SND). Catalysis depends on asparagine 88, which acts as the Proton acceptor. Substrate-binding positions include arginine 92, arginine 207, and 213-215 (RLS). Glutamate 226 is a Mg(2+) binding site.

This sequence belongs to the UPP synthase family. In terms of assembly, homodimer. Mg(2+) serves as cofactor.

Catalyzes the condensation of isopentenyl diphosphate (IPP) with allylic pyrophosphates generating different type of terpenoids. The protein is Isoprenyl transferase 2 of Tropheryma whipplei (strain Twist) (Whipple's bacillus).